Consider the following 133-residue polypeptide: Small ribosomal subunit protein uS8 (133 aa).

It belongs to the universal ribosomal protein uS8 family. In terms of assembly, part of the 30S ribosomal subunit. Contacts proteins S5 and S12.

In terms of biological role, one of the primary rRNA binding proteins, it binds directly to 16S rRNA central domain where it helps coordinate assembly of the platform of the 30S subunit. In Deinococcus deserti (strain DSM 17065 / CIP 109153 / LMG 22923 / VCD115), this protein is Small ribosomal subunit protein uS8.